Here is a 199-residue protein sequence, read N- to C-terminus: Elongation factor Ts (199 aa).

The involved in Mg(2+) ion dislocation from EF-Tu stretch occupies residues 82–85; that stretch reads TDFV.

This sequence belongs to the EF-Ts family.

Its subcellular location is the cytoplasm. Functionally, associates with the EF-Tu.GDP complex and induces the exchange of GDP to GTP. It remains bound to the aminoacyl-tRNA.EF-Tu.GTP complex up to the GTP hydrolysis stage on the ribosome. This chain is Elongation factor Ts, found in Leptospira interrogans serogroup Icterohaemorrhagiae serovar Lai (strain 56601).